The sequence spans 647 residues: Putative ferric-chelate reductase 1 homolog (647 aa).

A helical transmembrane segment spans residues 10 to 30; it reads WLATLVTALLAVAIWPDPGQS. The region spanning 25–195 is the Reelin domain; it reads PDPGQSLPQG…AAPPLPTQSP (171 aa). Asparagine 127 and asparagine 158 each carry an N-linked (GlcNAc...) asparagine glycan. In terms of domain architecture, DOMON spans 245 to 368; sequence TKSCTSITVV…GKYHLLVASG (124 aa). Residues 372–570 enclose the Cytochrome b561 domain; sequence KENSVGYHDI…HLIFSIGGMA (199 aa). A helical membrane pass occupies residues 408 to 428; that stretch reads LHGAFMIAAWIGTTSLGIIFA. Heme b contacts are provided by histidine 409 and histidine 450. 5 helical membrane passes run 452 to 472, 480 to 500, 515 to 535, 548 to 568, and 616 to 636; these read LLMV…WVEL, HSII…GALF, GHWL…FFSV, WILV…SIGG, and LLGV…LLVV. 2 residues coordinate heme b: histidine 480 and histidine 516.

The protein belongs to the FRRS1 family. Heme b serves as cofactor.

Its subcellular location is the membrane. Its function is as follows. Putative ferric-chelate reductases reduce Fe(3+) to Fe(2+) before its transport from the endosome to the cytoplasm. In Drosophila melanogaster (Fruit fly), this protein is Putative ferric-chelate reductase 1 homolog.